The chain runs to 467 residues: Ribulose bisphosphate carboxylase large chain (467 aa).

Lysine 5 carries the N6,N6,N6-trimethyllysine modification. Substrate-binding residues include asparagine 114 and threonine 164. The Proton acceptor role is filled by lysine 166. A substrate-binding site is contributed by lysine 168. The Mg(2+) site is built by lysine 192, aspartate 194, and glutamate 195. Position 192 is an N6-carboxylysine (lysine 192). Histidine 285 (proton acceptor) is an active-site residue. Residues arginine 286, histidine 318, and serine 370 each contribute to the substrate site.

This sequence belongs to the RuBisCO large chain family. Type I subfamily. As to quaternary structure, heterohexadecamer of 8 large chains and 8 small chains; disulfide-linked. The disulfide link is formed within the large subunit homodimers. The cofactor is Mg(2+). Post-translationally, the disulfide bond which can form in the large chain dimeric partners within the hexadecamer appears to be associated with oxidative stress and protein turnover.

Its subcellular location is the plastid. It is found in the chloroplast. It catalyses the reaction 2 (2R)-3-phosphoglycerate + 2 H(+) = D-ribulose 1,5-bisphosphate + CO2 + H2O. The enzyme catalyses D-ribulose 1,5-bisphosphate + O2 = 2-phosphoglycolate + (2R)-3-phosphoglycerate + 2 H(+). Functionally, ruBisCO catalyzes two reactions: the carboxylation of D-ribulose 1,5-bisphosphate, the primary event in carbon dioxide fixation, as well as the oxidative fragmentation of the pentose substrate in the photorespiration process. Both reactions occur simultaneously and in competition at the same active site. This Scutellaria bolanderi (Sierra skullcap) protein is Ribulose bisphosphate carboxylase large chain.